Here is a 699-residue protein sequence, read N- to C-terminus: Autophagy-related protein 9 (699 aa).

The Cytoplasmic portion of the chain corresponds to 1 to 98 (MSHEDRGGDY…KGFMCIFFND (98 aa)). The helical transmembrane segment at 99 to 119 (LFELVSSLFVVLFFTFLVCFV) threads the bilayer. The Lumenal segment spans residues 120–139 (DYSKLFSEQMPPPALRESVN). Asn139 carries N-linked (GlcNAc...) asparagine glycosylation. Residues 140–160 (FSAPIPIWLMVFLVIFSLYWL) traverse the membrane as a helical segment. Residues 161 to 299 (SKLFSFFSSI…KRLSRGLSRR (139 aa)) lie on the Cytoplasmic side of the membrane. Residues 300-320 (FMTIGILGLFTTPFIFFFLLI) lie within the membrane without spanning it. The Cytoplasmic segment spans residues 321–385 (NFFFEYAEEL…ESFPSQMLST (65 aa)). Residues 386–406 (IAKFISFLFGSVLAVFIVLGI) traverse the membrane as a helical segment. At 407-420 (VSDHFIMNYQIFDR) the chain is on the lumenal side. A helical transmembrane segment spans residues 421–441 (TPIWYIGILGTIVAITRSLIV). Topologically, residues 442 to 487 (DENQVFQPAKHMARTVQNTHYLPMSWVGKTHTHKVRDEFLVLFEYR) are cytoplasmic. The stretch at 488–508 (IVDFVRDIFSVLFTPFILIFS) is an intramembrane region. At 509 to 699 (LPKSSQAIID…HKNDNFVNSI (191 aa)) the chain is on the cytoplasmic side. Positions 599-618 (IKNNNNNNNNNGSNNHIGNH) are enriched in low complexity. The tract at residues 599-620 (IKNNNNNNNNNGSNNHIGNHSQ) is disordered.

The protein belongs to the ATG9 family. As to quaternary structure, homotrimer; forms a homotrimer with a central pore that forms a path between the two membrane leaflets.

Its subcellular location is the preautophagosomal structure membrane. The protein resides in the cytoplasmic vesicle membrane. It catalyses the reaction a 1,2-diacyl-sn-glycero-3-phosphocholine(in) = a 1,2-diacyl-sn-glycero-3-phosphocholine(out). The catalysed reaction is a 1,2-diacyl-sn-glycero-3-phospho-L-serine(in) = a 1,2-diacyl-sn-glycero-3-phospho-L-serine(out). The enzyme catalyses a 1,2-diacyl-sn-glycero-3-phosphoethanolamine(in) = a 1,2-diacyl-sn-glycero-3-phosphoethanolamine(out). In terms of biological role, phospholipid scramblase involved in autophagy by mediating autophagosomal membrane expansion. Cycles between the preautophagosomal structure/phagophore assembly site (PAS) and the cytoplasmic vesicle pool and supplies membrane for the growing autophagosome. Lipid scramblase activity plays a key role in preautophagosomal structure/phagophore assembly by distributing the phospholipids that arrive through ATG2 from the cytoplasmic to the luminal leaflet of the bilayer, thereby driving autophagosomal membrane expansion. Required for lipopolysaccharide (LPS)-enhanced bacterial clearance through the autophagic pathway. The chain is Autophagy-related protein 9 (atg9) from Dictyostelium discoideum (Social amoeba).